A 130-amino-acid chain; its full sequence is Glycine cleavage system H protein (130 aa).

One can recognise a Lipoyl-binding domain in the interval 22-103; the sequence is QAWIGISDYA…PYANYIVVVA (82 aa). The residue at position 63 (lysine 63) is an N6-lipoyllysine.

Belongs to the GcvH family. The glycine cleavage system is composed of four proteins: P, T, L and H. (R)-lipoate serves as cofactor.

Functionally, the glycine cleavage system catalyzes the degradation of glycine. The H protein shuttles the methylamine group of glycine from the P protein to the T protein. This chain is Glycine cleavage system H protein, found in Syntrophomonas wolfei subsp. wolfei (strain DSM 2245B / Goettingen).